Reading from the N-terminus, the 465-residue chain is Mothers against decapentaplegic homolog 1 (465 aa).

Met-1 is modified (N-acetylmethionine). The 125-residue stretch at 12–136 (PAVKRLLGWK…YKRVESPVLP (125 aa)) folds into the MH1 domain. Residues Cys-64, Cys-109, Cys-121, and His-126 each coordinate Zn(2+). The disordered stretch occupies residues 162-248 (NEPHMPLNAT…SQPMDTNMMA (87 aa)). Over residues 179-210 (PNSHPFPHSPNSSYPNSPGSSSSTYPHSPTSS) the composition is skewed to low complexity. Residues 221–232 (DTPPPAYLPPED) are compositionally biased toward pro residues. Positions 271-465 (WCSIVYYELN…SPHNPISSVS (195 aa)) constitute an MH2 domain. Position 322 is a phosphothreonine; by MINK1, TNIK and MAP4K4 (Thr-322). The tract at residues 418–428 (KGWGAEYHRQD) is L3 loop. Ser-463 and Ser-465 each carry phosphoserine.

Belongs to the dwarfin/SMAD family. As to quaternary structure, found in a complex with SMAD4 and YY1. Interacts with HGS, NANOG and ZCCHC12. Upon C-terminus phosphorylation: forms trimers with another SMAD1 and the co-SMAD SMAD4. Interacts with PEBP2-alpha subunit, CREB-binding protein (CBP), p300, SMURF1, SMURF2, USP15 and HOXC8. Associates with ZNF423 or ZNF521 in response to BMP2 leading to activate transcription of BMP target genes. Interacts with SKOR1. Interacts (via MH2 domain) with LEMD3. Binding to LEMD3 results in at least a partial reduction of receptor-mediated phosphorylation. Forms a ternary complex with PSMB4 and OAZ1 before PSMB4 is incorporated into the 20S proteasome. Interacts (via MH2 domain) with FAM83G (via MH2 domain); in a SMAD4-independent manner. Interacts with ZC3H3. Interacts with TMEM119. Interacts (via MH1 and MH2 domains) with ZNF8. Interacts with RANBP3L; the interaction increases when SMAD1 is not phosphorylated and mediates SMAD1 nuclear export. Interacts with EGR1; this interaction inhibits SMAD1 dephosphorylation. Interacts with SMAD6. Interacts with YAP1. Interacts with MTMR4; negatively regulates BMP signaling through SMAD1 dephosphorylation and retention in endosomes. In terms of processing, phosphorylation of the C-terminal SVS motif by BMP type 1 receptor kinase activates SMAD1 by promoting dissociation from the receptor and trimerization with SMAD4. Phosphorylation by ERK2 MAP kinase in response to EGF or HGF prevents SMAD1 nuclear accumulation and transcriptional activity in response to BMP. Dephosphorylation, probably by PPM1A, induces its export from the nucleus to the cytoplasm. Dephosphorylation is inhibited by association with EGR1. Phosphorylation by CDK8/9 creates binding sites for YAP1, and subsequent phosphorylation by GSK3 switches off YAP1 binding and adds binding sites for SMURF1. Ubiquitinated by SMAD-specific E3 ubiquitin ligase SMURF1, leading to its degradation. Monoubiquitinated, leading to prevent DNA-binding. Deubiquitination by USP15 alleviates inhibition and promotes activation of TGF-beta target genes. Dephosphorylation, probably by PPM1A, induces its export from the nucleus to the cytoplasm. Phospho-SMAD1 is ubiquitinated by CHIP leading to disruption of the SMAD1-SMAD4 complex. Ubiquitous. Highest expression seen in the heart and skeletal muscle.

The protein localises to the cytoplasm. Its subcellular location is the nucleus. Functionally, transcriptional modulator that plays a role in various cellular processes, including embryonic development, cell differentiation, and tissue homeostasis. Upon BMP ligand binding to their receptors at the cell surface, is phosphorylated by activated type I BMP receptors (BMPRIs) and associates with SMAD4 to form a heteromeric complex which translocates into the nucleus acting as transcription factor. In turn, the hetero-trimeric complex recognizes cis-regulatory elements containing Smad Binding Elements (SBEs) to modulate the outcome of the signaling network. SMAD1/OAZ1/PSMB4 complex mediates the degradation of the CREBBP/EP300 repressor SNIP1. Positively regulates BMP4-induced expression of odontogenic development regulator MSX1 following IPO7-mediated nuclear import. This is Mothers against decapentaplegic homolog 1 (SMAD1) from Homo sapiens (Human).